We begin with the raw amino-acid sequence, 259 residues long: 5'-nucleotidase SurE (259 aa).

D8, D9, S40, and N92 together coordinate a divalent metal cation.

The protein belongs to the SurE nucleotidase family. A divalent metal cation is required as a cofactor.

It localises to the cytoplasm. The catalysed reaction is a ribonucleoside 5'-phosphate + H2O = a ribonucleoside + phosphate. Nucleotidase that shows phosphatase activity on nucleoside 5'-monophosphates. In Xanthomonas campestris pv. campestris (strain 8004), this protein is 5'-nucleotidase SurE.